The chain runs to 65 residues: Protein C' (65 aa).

This sequence belongs to the rhabdoviruses C protein family.

In terms of biological role, seems to stimulates transcription by the viral polymerase. May play a role in viral pathogenesis or transmission by insects vectors. This chain is Protein C' (P), found in Vesicular stomatitis New Jersey virus (strain Missouri subtype Hazelhurst) (VSNJV).